A 312-amino-acid chain; its full sequence is Ribosomal protein L11 methyltransferase (312 aa).

S-adenosyl-L-methionine is bound by residues threonine 160, glycine 181, aspartate 203, and asparagine 246.

Belongs to the methyltransferase superfamily. PrmA family.

The protein localises to the cytoplasm. It carries out the reaction L-lysyl-[protein] + 3 S-adenosyl-L-methionine = N(6),N(6),N(6)-trimethyl-L-lysyl-[protein] + 3 S-adenosyl-L-homocysteine + 3 H(+). Functionally, methylates ribosomal protein L11. This Staphylococcus carnosus (strain TM300) protein is Ribosomal protein L11 methyltransferase.